The following is a 166-amino-acid chain: Small ribosomal subunit protein uS5 (166 aa).

In terms of domain architecture, S5 DRBM spans 11 to 74 (LQEKLIAVNR…EKARRNMINV (64 aa)).

The protein belongs to the universal ribosomal protein uS5 family. Part of the 30S ribosomal subunit. Contacts proteins S4 and S8.

Functionally, with S4 and S12 plays an important role in translational accuracy. In terms of biological role, located at the back of the 30S subunit body where it stabilizes the conformation of the head with respect to the body. In Haemophilus ducreyi (strain 35000HP / ATCC 700724), this protein is Small ribosomal subunit protein uS5.